A 97-amino-acid polypeptide reads, in one-letter code: Probable lipopolysaccharide assembly protein A (97 aa).

Transmembrane regions (helical) follow at residues 1 to 21 (MIKY…AITI) and 46 to 66 (VAIL…FFYI). Positions 67-95 (KLKLKNMALARQVKRQTLQINELTTTRDK) form a coiled coil.

The protein belongs to the LapA family.

Its subcellular location is the cell inner membrane. Its function is as follows. Involved in the assembly of lipopolysaccharide (LPS). The chain is Probable lipopolysaccharide assembly protein A from Haemophilus influenzae (strain ATCC 51907 / DSM 11121 / KW20 / Rd).